The sequence spans 161 residues: 6,7-dimethyl-8-ribityllumazine synthase (161 aa).

5-amino-6-(D-ribitylamino)uracil-binding positions include tryptophan 25, alanine 57–glutamate 59, and valine 80–isoleucine 82. Glycine 85 to threonine 86 serves as a coordination point for (2S)-2-hydroxy-3-oxobutyl phosphate. Histidine 88 serves as the catalytic Proton donor. Phenylalanine 113 is a binding site for 5-amino-6-(D-ribitylamino)uracil. Residue arginine 127 coordinates (2S)-2-hydroxy-3-oxobutyl phosphate.

This sequence belongs to the DMRL synthase family.

It carries out the reaction (2S)-2-hydroxy-3-oxobutyl phosphate + 5-amino-6-(D-ribitylamino)uracil = 6,7-dimethyl-8-(1-D-ribityl)lumazine + phosphate + 2 H2O + H(+). Its pathway is cofactor biosynthesis; riboflavin biosynthesis; riboflavin from 2-hydroxy-3-oxobutyl phosphate and 5-amino-6-(D-ribitylamino)uracil: step 1/2. Catalyzes the formation of 6,7-dimethyl-8-ribityllumazine by condensation of 5-amino-6-(D-ribitylamino)uracil with 3,4-dihydroxy-2-butanone 4-phosphate. This is the penultimate step in the biosynthesis of riboflavin. The sequence is that of 6,7-dimethyl-8-ribityllumazine synthase from Kineococcus radiotolerans (strain ATCC BAA-149 / DSM 14245 / SRS30216).